Here is a 244-residue protein sequence, read N- to C-terminus: Transcription factor Sox-12 (244 aa).

A disordered region spans residues 1–22; it reads MVQNKTTGSCPKPTEVAPGGPS. Residues 31 to 99 constitute a DNA-binding region (HMG box); the sequence is IKRPMNAFMV…KHMADYPNYK (69 aa). Disordered stretches follow at residues 101 to 137 and 152 to 193; these read RPRRRSRTQESKTRARLPRSTATCQSVPSPCLSQMDT and GDQV…HEGL. Composition is skewed to polar residues over residues 120-137 and 176-186; these read STATCQSVPSPCLSQMDT and HTKTVPSSPQS.

In terms of tissue distribution, expressed at a low level in embryos, and in the adult lung, ovary, skeletal muscle, testis, brain and heart.

It localises to the nucleus. In terms of biological role, transcription factor that binds to the sequence 5'-AACAAT-3'. Acts as a transcriptional activator. The sequence is that of Transcription factor Sox-12 (sox12) from Xenopus laevis (African clawed frog).